The sequence spans 309 residues: Carbonic anhydrase 4 (309 aa).

The first 17 residues, 1–17 (MQLLLALLALAYVAPST), serve as a signal peptide directing secretion. Residues 20–282 (SHWCYEIQAK…LGNRQVFRSH (263 aa)) form the Alpha-carbonic anhydrase domain. Cystine bridges form between cysteine 23–cysteine 35 and cysteine 45–cysteine 226. Histidine 87 functions as the Proton donor/acceptor in the catalytic mechanism. Histidine 114, histidine 116, and histidine 139 together coordinate Zn(2+). Asparagine 193 is a glycosylation site (N-linked (GlcNAc...) asparagine). A substrate-binding site is contributed by 222-223 (TT). Serine 281 carries GPI-anchor amidated serine lipidation. A propeptide spans 282–309 (HASGRLLSLPLPTLLVPTLTCLVASFLH) (removed in mature form).

This sequence belongs to the alpha-carbonic anhydrase family. As to quaternary structure, interacts with SLC4A4. Zn(2+) is required as a cofactor. Post-translationally, the N-terminus is blocked. In terms of processing, glycosylated. In terms of tissue distribution, present in kidney and lung. Also particularly abundant in brain, muscle, heart and liver. Not detected in skin or spleen.

Its subcellular location is the cell membrane. It carries out the reaction hydrogencarbonate + H(+) = CO2 + H2O. Inhibited by acetazolamide. Catalyzes the reversible hydration of carbon dioxide into bicarbonate and protons and thus is essential to maintaining intracellular and extracellular pH. May stimulate the sodium/bicarbonate transporter activity of SLC4A4 that acts in pH homeostasis. It is essential for acid overload removal from the retina and retina epithelium, and acid release in the choriocapillaris in the choroid. The protein is Carbonic anhydrase 4 (Ca4) of Rattus norvegicus (Rat).